The sequence spans 387 residues: Sorting nexin-7 (387 aa).

Positions 30–151 (KDLFITVDAP…VFLTAQAEEL (122 aa)) constitute a PX domain. Positions 73, 75, 103, and 117 each coordinate a 1,2-diacyl-sn-glycero-3-phospho-(1D-myo-inositol-3-phosphate). The BAR domain maps to 178-387 (GVKNRPEEFM…PSEEDSEEKL (210 aa)).

Belongs to the sorting nexin family. Heterodimer; heterodimerizes with SNX4.

The protein resides in the early endosome membrane. In terms of biological role, involved in the regulation of endocytosis and in several stages of intracellular trafficking. Together with SNX4, involved in autophagosome assembly by regulating trafficking and recycling of phospholipid scramblase ATG9A. In Mus musculus (Mouse), this protein is Sorting nexin-7.